Reading from the N-terminus, the 404-residue chain is Argininosuccinate synthase (404 aa).

ATP-binding positions include 11–19 (AYSGGLDTS) and alanine 38. L-citrulline contacts are provided by tyrosine 91 and serine 96. ATP is bound at residue glycine 121. Positions 123, 127, and 128 each coordinate L-aspartate. An L-citrulline-binding site is contributed by asparagine 127. Positions 131, 182, 191, 267, and 279 each coordinate L-citrulline.

This sequence belongs to the argininosuccinate synthase family. Type 1 subfamily. Homotetramer.

The protein localises to the cytoplasm. It catalyses the reaction L-citrulline + L-aspartate + ATP = 2-(N(omega)-L-arginino)succinate + AMP + diphosphate + H(+). It participates in amino-acid biosynthesis; L-arginine biosynthesis; L-arginine from L-ornithine and carbamoyl phosphate: step 2/3. The protein is Argininosuccinate synthase of Paramagnetospirillum magneticum (strain ATCC 700264 / AMB-1) (Magnetospirillum magneticum).